Consider the following 172-residue polypeptide: Lipoprotein signal peptidase (172 aa).

Transmembrane regions (helical) follow at residues 4-24 (LSSSAITTTWLAMIIIVLDQV), 39-59 (VAILPHLNLTLVYNYGAAFSF), 69-89 (WFFTALALVVGTALVIWLAKL), and 93-113 (WTLEVVAINLVLSGAIGNVID). Residues Asp122 and Asp140 contribute to the active site. Residues 136 to 156 (FNVADMGISIGAVLLIISEFW) form a helical membrane-spanning segment.

The protein belongs to the peptidase A8 family.

It is found in the cell inner membrane. The catalysed reaction is Release of signal peptides from bacterial membrane prolipoproteins. Hydrolyzes -Xaa-Yaa-Zaa-|-(S,diacylglyceryl)Cys-, in which Xaa is hydrophobic (preferably Leu), and Yaa (Ala or Ser) and Zaa (Gly or Ala) have small, neutral side chains.. It functions in the pathway protein modification; lipoprotein biosynthesis (signal peptide cleavage). Functionally, this protein specifically catalyzes the removal of signal peptides from prolipoproteins. This Hydrogenovibrio crunogenus (strain DSM 25203 / XCL-2) (Thiomicrospira crunogena) protein is Lipoprotein signal peptidase.